A 495-amino-acid polypeptide reads, in one-letter code: MGASVSSDITNTITCNLQEASNTILNNQNLNDHQGIFVNIIKIGDGNINANNFAEKSNASIDINALANALNNSSMNEDLNKKIAQTAKAAIKGVNLMQLGDANTTINDIVNTSIKVKNTAIQNLIIRFDQKIKINIYHIGKGNIKVKNVHLKEIHKIITKEVENAKNNNKDVTKLIEQFSQATESKVEGFSLKILSLIIFSTAFLGLGGVYVGGKIAFPVTLLLSILAFYQYFNWTDRTIFTDGFVDTMFNIDNDGCEALKNLTIENVKSAKGASDRCLKNPKCVAYNWNHNTKKITMFKGVLEEGCKNDILKNNTNETLFERKKLIVREGKKDPIMSTNGDLYLNNKNQTLWYNYKKKKQNNWKELKNEKKIILDNSIKQGIDKFIKIIFGYEEKLPGPMPHTLYIDYSHNNHLKVFLCKLNFLIGKDFKNRDQSKDWTLISTIHLDIKMLDFEENDSCGVIVEQNKLWLLCVAVILLFIGIIGMGLGLKKNKN.

The N-myristoyl glycine; by host moiety is linked to residue Gly2. 5 N-linked (GlcNAc...) asparagine; by host glycosylation sites follow: Asn58, Asn71, Asn72, Asn103, and Asn111. Positions 150–182 (HLKEIHKIITKEVENAKNNNKDVTKLIEQFSQA) form a coiled coil. A run of 2 helical transmembrane segments spans residues 194–214 (ILSL…YVGG) and 216–236 (IAFP…FNWT). Residues Asn262, Asn314, Asn317, Asn349, and Asn457 are each glycosylated (N-linked (GlcNAc...) asparagine; by host). Residues 469–489 (LWLLCVAVILLFIGIIGMGLG) traverse the membrane as a helical segment.

This sequence belongs to the IIV-6 118L/458R family.

It localises to the membrane. The sequence is that of Putative myristoylated membrane protein 458R from Acheta domesticus (House cricket).